Consider the following 446-residue polypeptide: L-2-hydroxyglutarate dehydrogenase, mitochondrial (446 aa).

A mitochondrion-targeting transit peptide spans 1–28 (MKNSSSMLKGVKSFIGSGIYTNKPIYDV).

Belongs to the L2HGDH family. The cofactor is FAD.

The protein localises to the mitochondrion. The catalysed reaction is (S)-2-hydroxyglutarate + A = 2-oxoglutarate + AH2. The polypeptide is L-2-hydroxyglutarate dehydrogenase, mitochondrial (l2hgdh) (Dictyostelium discoideum (Social amoeba)).